The following is a 210-amino-acid chain: Ion-translocating oxidoreductase complex subunit G (210 aa).

Residues 9–29 (SLVLALFAIAATALVTITYAL) traverse the membrane as a helical segment. At T176 the chain carries FMN phosphoryl threonine.

The protein belongs to the RnfG family. The complex is composed of six subunits: RnfA, RnfB, RnfC, RnfD, RnfE and RnfG. It depends on FMN as a cofactor.

The protein localises to the cell inner membrane. Part of a membrane-bound complex that couples electron transfer with translocation of ions across the membrane. This is Ion-translocating oxidoreductase complex subunit G from Aliivibrio fischeri (strain ATCC 700601 / ES114) (Vibrio fischeri).